The primary structure comprises 642 residues: Chaperone protein HtpG (642 aa).

The segment at 1-348 (MSTKIEQLEF…AQDLSLNVSR (348 aa)) is a; substrate-binding. The b stretch occupies residues 349 to 564 (EILQQDRQIR…AFSMSPALER (216 aa)). The c stretch occupies residues 565–642 (MYRASGQPVP…MLANRLARTV (78 aa)).

This sequence belongs to the heat shock protein 90 family. As to quaternary structure, homodimer.

The protein localises to the cytoplasm. Functionally, molecular chaperone. Has ATPase activity. The chain is Chaperone protein HtpG from Rhodococcus jostii (strain RHA1).